The primary structure comprises 305 residues: MSSQTAPRRRVTIHELRRMKDAGEKIAVVTAYDATAARLADAAGVDVVLVGDSLGMVVQGHESTLPVTLEHMIYHSAAVRRGLARSSGRAHLVGDMPFGSYQASADEAVKSAMRLVAEGGVESVKLEGGAEFVEVIRRIARAGVPVMGHIGLTPQAVHRMGGYVVQGKDSEKAQQLLRDARALELAGCYAIVLECIPAELARIISSQLRIPTIGIGAGLHCDGQVLVLNDLLGMDDAFTPKFVKRFGEIGQAISTAVGAYVGEVKRRVFPDDAHSFHSSTVRLVPAAPVDEDDGEPSGGVMGAPV.

Mg(2+) contacts are provided by Asp52 and Asp95. 3-methyl-2-oxobutanoate is bound by residues 52–53, Asp95, and Lys125; that span reads DS. Residue Glu127 participates in Mg(2+) binding. Glu194 acts as the Proton acceptor in catalysis.

The protein belongs to the PanB family. Homodecamer; pentamer of dimers. Mg(2+) is required as a cofactor.

It is found in the cytoplasm. The enzyme catalyses 3-methyl-2-oxobutanoate + (6R)-5,10-methylene-5,6,7,8-tetrahydrofolate + H2O = 2-dehydropantoate + (6S)-5,6,7,8-tetrahydrofolate. It participates in cofactor biosynthesis; (R)-pantothenate biosynthesis; (R)-pantoate from 3-methyl-2-oxobutanoate: step 1/2. In terms of biological role, catalyzes the reversible reaction in which hydroxymethyl group from 5,10-methylenetetrahydrofolate is transferred onto alpha-ketoisovalerate to form ketopantoate. The sequence is that of 3-methyl-2-oxobutanoate hydroxymethyltransferase from Anaeromyxobacter sp. (strain Fw109-5).